The chain runs to 367 residues: NADH-quinone oxidoreductase subunit D (367 aa).

It belongs to the complex I 49 kDa subunit family. As to quaternary structure, NDH-1 is composed of 14 different subunits. Subunits NuoB, C, D, E, F, and G constitute the peripheral sector of the complex.

The protein localises to the cell membrane. The enzyme catalyses a quinone + NADH + 5 H(+)(in) = a quinol + NAD(+) + 4 H(+)(out). Functionally, NDH-1 shuttles electrons from NADH, via FMN and iron-sulfur (Fe-S) centers, to quinones in the respiratory chain. The immediate electron acceptor for the enzyme in this species is believed to be ubiquinone. Couples the redox reaction to proton translocation (for every two electrons transferred, four hydrogen ions are translocated across the cytoplasmic membrane), and thus conserves the redox energy in a proton gradient. The polypeptide is NADH-quinone oxidoreductase subunit D (Dehalococcoides mccartyi (strain ATCC BAA-2266 / KCTC 15142 / 195) (Dehalococcoides ethenogenes (strain 195))).